A 606-amino-acid chain; its full sequence is Cryptochrome-1 (606 aa).

One can recognise a Photolyase/cryptochrome alpha/beta domain in the interval 3 to 132; that stretch reads VNAVHWFRKG…EVIVRISHTL (130 aa). Lysine 11 participates in a covalent cross-link: Glycyl lysine isopeptide (Lys-Gly) (interchain with G-Cter in ubiquitin). The short motif at 50–54 is the LIR 1 element; it reads NRWRF. Phosphoserine; by AMPK is present on serine 71. Residues 82–87 carry the LIR 2 motif; sequence DVFPRL. Lysine 107 participates in a covalent cross-link: Glycyl lysine isopeptide (Lys-Gly) (interchain with G-Cter in ubiquitin). The short motif at 151-156 is the LIR 3 element; it reads KRFQTL. Residue lysine 159 forms a Glycyl lysine isopeptide (Lys-Gly) (interchain with G-Cter in ubiquitin) linkage. Serine 247 is modified (phosphoserine; by MAPK). Serine 252 contacts FAD. 2 consecutive short sequence motifs (LIR) follow at residues 255 to 260 and 271 to 276; these read LRFGCL and DLYKKV. Serine 280 bears the Phosphoserine; by AMPK mark. Positions 285-290 match the LIR 6 motif; sequence SLYGQL. Glutamine 289 contributes to the FAD binding site. Lysine 329 participates in a covalent cross-link: Glycyl lysine isopeptide (Lys-Gly) (interchain with G-Cter in ubiquitin). The LIR 7 signature appears at 335–339; it reads TGFPW. Histidine 355 is a binding site for FAD. Positions 371-470 are required for inhibition of CLOCK-BMAL1-mediated transcription; sequence WISWEEGMKV…LIGVNYPKPM (100 aa). An LIR 8 motif is present at residues 379–384; it reads KVFEEL. FAD is bound at residue 387-389; sequence DAD. 3 short sequence motifs (LIR) span residues 395 to 400, 411 to 416, and 430 to 435; these read GSWMWL, HCYCPV, and RRYLPV. The tract at residues 471–493 is interaction with TIMELESS; sequence VNHAEASRLNIERMKQIYQQLSR. Lysine 485 participates in a covalent cross-link: Glycyl lysine isopeptide (Lys-Gly) (interchain with G-Cter in ubiquitin). Short sequence motifs (LIR) lie at residues 486-491 and 492-497; these read QIYQQL and SRYRGL. The interval 559–606 is disordered; the sequence is YAHGDSQQTHSLKQGRSSAGTGLSSGKRPSQEEDAQSVGPKVQRQSSN. The segment covering 563–586 has biased composition (polar residues); the sequence is DSQQTHSLKQGRSSAGTGLSSGKR. A Glycyl lysine isopeptide (Lys-Gly) (interchain with G-Cter in ubiquitin) cross-link involves residue lysine 585. At serine 588 the chain carries Phosphoserine.

The protein belongs to the DNA photolyase class-1 family. As to quaternary structure, component of the circadian core oscillator, which includes the CRY proteins, CLOCK or NPAS2, BMAL1 or BMAL2, CSNK1D and/or CSNK1E, TIMELESS, and the PER proteins. Interacts directly with TIMELESS. Interacts directly with PER1 and PER2; interaction with PER2 inhibits its ubiquitination and vice versa. Interacts with PER3. Interacts with FBXL21. Interacts with FBXL3. Interacts with PPP5C (via TPR repeats). Interacts with CLOCK-BMAL1 independently of PER2 and DNA. Interacts with HDAC1, HDAC2 and SIN3B. Interacts with nuclear receptors AR, NR1D1, NR3C1/GR, RORA and RORC; the interaction with at least NR3C1/GR is ligand dependent. Interacts with PRKDC. Interacts with the G protein subunit alpha GNAS; the interaction may block GPCR-mediated regulation of cAMP concentrations. Interacts with PRMT5. Interacts with EZH2. Interacts with MYBBP1A, DOCK7, HNRNPU, RPL7A, RPL8 and RPS3. Interacts with MAP1LC3B. Interacts with CLOCK. Interacts with BMAL1. Interacts weakly with HDAC3; this interaction is enhanced in the presence of FBXL3. Interacts with TRIM28, KCTD5 and DDB1. Interacts with DTL. Interacts with DDB1-CUL4A complex. Interacts with FOXO1. Interacts with PSMD2 in a KDM8-dependent manner. Interacts with KDM8 in a FBXL3-dependent manner. Interacts with PPARA. Interacts with PPARG in a ligand-dependent manner. Interacts with PPARD (via domain NR LBD) in a ligand-dependent manner. Interacts with NR1I2 (via domain NR LBD) in a ligand-dependent manner. Interacts with NR1I3, VDR and HNF4A. The cofactor is FAD. (6R)-5,10-methylene-5,6,7,8-tetrahydrofolate is required as a cofactor. In terms of processing, phosphorylation on Ser-247 by MAPK is important for the inhibition of CLOCK-BMAL1-mediated transcriptional activity. Phosphorylation by CSNK1E requires interaction with PER1 or PER2. Phosphorylation at Ser-71 and Ser-280 by AMPK decreases protein stability. Phosphorylation at Ser-588 exhibits a robust circadian rhythm with a peak at CT8, increases protein stability, prevents SCF(FBXL3)-mediated degradation and is antagonized by interaction with PRKDC. Post-translationally, ubiquitinated by the SCF(FBXL3) and SCF(FBXL21) complexes, regulating the balance between degradation and stabilization. The SCF(FBXL3) complex is mainly nuclear and mediates ubiquitination and subsequent degradation of CRY1. In contrast, cytoplasmic SCF(FBXL21) complex-mediated ubiquitination leads to stabilize CRY1 and counteract the activity of the SCF(FBXL3) complex. The SCF(FBXL3) and SCF(FBXL21) complexes probably mediate ubiquitination at different Lys residues. Ubiquitination at Lys-11 and Lys-107 are specifically ubiquitinated by the SCF(FBXL21) complex but not by the SCF(FBXL3) complex. Ubiquitination may be inhibited by PER2. Deubiquitinated by USP7. Undergoes autophagy-mediated degradation in the liver in a time-dependent manner. Autophagic degradation of CRY1 (an inhibitor of gluconeogenesis) occurs during periods of reduced feeding allowing induction of gluconeogenesis and maintenance of blood glucose levels. Expressed in cones, amacrine cells, and retinal ganglion cells of the retina (at protein level). Expressed in all tissues examined including heart, brain, spleen, lung, liver, skeletal muscle, kidney and testis. Higher levels in brain, liver and testis. In the retina, highly expressed in the ganglion cell layer (GCL) and in the inner nuclear layer (INL). Evenly distributed in central and peripheral retina. In the brain, highly expressed in the suprachiasmatic nucleus (SCN). High levels in cerebral cortical layers particularly in the pyramidial cell layer of the hippocampus, the granular cell layer of the dentate gyrus (DG) and the pyramidal cell layer of the piriform cortex (PFC).

The protein localises to the cytoplasm. It localises to the nucleus. KL001 (N-[3-(9H-carbazol-9-yl)-2-hydroxypropyl]-N-(2-furanylmethyl)-methanesulfonamide) binds to CRY1 and stabilizes it by inhibiting FBXL3- and ubiquitin-dependent degradation of CRY1 resulting in lengthening of the circadian periods. KL001-mediated CRY1 stabilization can inhibit glucagon-induced gluconeogenesis in primary hepatocytes. Functionally, transcriptional repressor which forms a core component of the circadian clock. The circadian clock, an internal time-keeping system, regulates various physiological processes through the generation of approximately 24 hour circadian rhythms in gene expression, which are translated into rhythms in metabolism and behavior. It is derived from the Latin roots 'circa' (about) and 'diem' (day) and acts as an important regulator of a wide array of physiological functions including metabolism, sleep, body temperature, blood pressure, endocrine, immune, cardiovascular, and renal function. Consists of two major components: the central clock, residing in the suprachiasmatic nucleus (SCN) of the brain, and the peripheral clocks that are present in nearly every tissue and organ system. Both the central and peripheral clocks can be reset by environmental cues, also known as Zeitgebers (German for 'timegivers'). The predominant Zeitgeber for the central clock is light, which is sensed by retina and signals directly to the SCN. The central clock entrains the peripheral clocks through neuronal and hormonal signals, body temperature and feeding-related cues, aligning all clocks with the external light/dark cycle. Circadian rhythms allow an organism to achieve temporal homeostasis with its environment at the molecular level by regulating gene expression to create a peak of protein expression once every 24 hours to control when a particular physiological process is most active with respect to the solar day. Transcription and translation of core clock components (CLOCK, NPAS2, BMAL1, BMAL2, PER1, PER2, PER3, CRY1 and CRY2) plays a critical role in rhythm generation, whereas delays imposed by post-translational modifications (PTMs) are important for determining the period (tau) of the rhythms (tau refers to the period of a rhythm and is the length, in time, of one complete cycle). A diurnal rhythm is synchronized with the day/night cycle, while the ultradian and infradian rhythms have a period shorter and longer than 24 hours, respectively. Disruptions in the circadian rhythms contribute to the pathology of cardiovascular diseases, cancer, metabolic syndromes and aging. A transcription/translation feedback loop (TTFL) forms the core of the molecular circadian clock mechanism. Transcription factors, CLOCK or NPAS2 and BMAL1 or BMAL2, form the positive limb of the feedback loop, act in the form of a heterodimer and activate the transcription of core clock genes and clock-controlled genes (involved in key metabolic processes), harboring E-box elements (5'-CACGTG-3') within their promoters. The core clock genes: PER1/2/3 and CRY1/2 which are transcriptional repressors form the negative limb of the feedback loop and interact with the CLOCK|NPAS2-BMAL1|BMAL2 heterodimer inhibiting its activity and thereby negatively regulating their own expression. This heterodimer also activates nuclear receptors NR1D1/2 and RORA/B/G, which form a second feedback loop and which activate and repress BMAL1 transcription, respectively. CRY1 and CRY2 have redundant functions but also differential and selective contributions at least in defining the pace of the SCN circadian clock and its circadian transcriptional outputs. More potent transcriptional repressor in cerebellum and liver than CRY2, though more effective in lengthening the period of the SCN oscillator. On its side, CRY2 seems to play a critical role in tuning SCN circadian period by opposing the action of CRY1. With CRY2, is dispensable for circadian rhythm generation but necessary for the development of intercellular networks for rhythm synchrony. Capable of translocating circadian clock core proteins such as PER proteins to the nucleus. Interacts with CLOCK-BMAL1 independently of PER proteins and is found at CLOCK-BMAL1-bound sites, suggesting that CRY may act as a molecular gatekeeper to maintain CLOCK-BMAL1 in a poised and repressed state until the proper time for transcriptional activation. Represses the CLOCK-BMAL1 induced transcription of BHLHE40/DEC1, ATF4, MTA1, KLF10 and NAMPT. May repress circadian target genes expression in collaboration with HDAC1 and HDAC2 through histone deacetylation. Mediates the clock-control activation of ATR and modulates ATR-mediated DNA damage checkpoint. In liver, mediates circadian regulation of cAMP signaling and gluconeogenesis by binding to membrane-coupled G proteins and blocking glucagon-mediated increases in intracellular cAMP concentrations and CREB1 phosphorylation. Inhibits hepatic gluconeogenesis by decreasing nuclear FOXO1 levels that down-regulates gluconeogenic gene expression. Besides its role in the maintenance of the circadian clock, is also involved in the regulation of other processes. Represses glucocorticoid receptor NR3C1/GR-induced transcriptional activity by binding to glucocorticoid response elements (GREs). Plays a key role in glucose and lipid metabolism modulation, in part, through the transcriptional regulation of genes involved in these pathways, such as LEP or ACSL4. Represses PPARD and its target genes in the skeletal muscle and limits exercise capacity. Plays an essential role in the generation of circadian rhythms in the retina. Represses the transcriptional activity of NR1I2. This chain is Cryptochrome-1 (Cry1), found in Mus musculus (Mouse).